A 90-amino-acid polypeptide reads, in one-letter code: Probable Fe(2+)-trafficking protein (90 aa).

This sequence belongs to the Fe(2+)-trafficking protein family.

Could be a mediator in iron transactions between iron acquisition and iron-requiring processes, such as synthesis and/or repair of Fe-S clusters in biosynthetic enzymes. This Cupriavidus pinatubonensis (strain JMP 134 / LMG 1197) (Cupriavidus necator (strain JMP 134)) protein is Probable Fe(2+)-trafficking protein.